The sequence spans 131 residues: Global transcriptional regulator Spx (131 aa).

Cysteine 10 and cysteine 13 are oxidised to a cystine.

Belongs to the ArsC family. Spx subfamily. As to quaternary structure, interacts with the C-terminal domain of the alpha subunit of the RNAP.

The protein localises to the cytoplasm. In terms of biological role, global transcriptional regulator that plays a key role in stress response and exerts either positive or negative regulation of genes. Acts by interacting with the C-terminal domain of the alpha subunit of the RNA polymerase (RNAP). This interaction can enhance binding of RNAP to the promoter region of target genes and stimulate their transcription, or block interaction of RNAP with activator. The polypeptide is Global transcriptional regulator Spx (Staphylococcus haemolyticus (strain JCSC1435)).